The following is a 304-amino-acid chain: D-alanine--D-alanine ligase (304 aa).

Positions 100 to 301 (KLVALQSGIP…FGEFLEDLIK (202 aa)) constitute an ATP-grasp domain. Position 129-184 (129-184 (ERKLGSPFIVKPCDVGSTIGLSLVRSASEYEVALEEAFRFSDRLLLEEFIDGFEVT)) interacts with ATP. D256, E268, and N270 together coordinate Mg(2+).

Belongs to the D-alanine--D-alanine ligase family. The cofactor is Mg(2+). It depends on Mn(2+) as a cofactor.

The protein localises to the cytoplasm. The enzyme catalyses 2 D-alanine + ATP = D-alanyl-D-alanine + ADP + phosphate + H(+). The protein operates within cell wall biogenesis; peptidoglycan biosynthesis. Functionally, cell wall formation. The chain is D-alanine--D-alanine ligase from Coprothermobacter proteolyticus (strain ATCC 35245 / DSM 5265 / OCM 4 / BT).